The sequence spans 1929 residues: Genome polyprotein (1929 aa).

Residues 597–753 (DSVISHCAKR…MSFKYENPGQ (157 aa)) enclose the SF3 helicase domain. Residue 623-630 (GPAGCGKT) coordinates ATP. Tyrosine 1137 carries the O-(5'-phospho-RNA)-tyrosine modification. Residues 1235–1391 (GKIVNHVNAI…KIVIPVTKFK (157 aa)) enclose the Peptidase C24 domain. Residues histidine 1271, glutamate 1292, and cysteine 1355 each act as for 3CLpro activity in the active site. The RdRp catalytic domain maps to 1643–1768 (THRYCVDYSK…IVPNFVHSVM (126 aa)).

Homodimer. Interacts with NTPase, protein p30 and protease-polymerase p76. As to quaternary structure, interacts with capsid protein VP1 and protease-polymerase p76. Interacts with host IEF4e; this interaction plays a role in translation of viral proteins. In terms of assembly, homooligomer. Interacts with Vpg, protein p32 and may interact with capsid protein VP1. Specific enzymatic cleavages in vivo yield mature proteins. Pro-Pol is first autocatalytically cleaved, then processes the whole polyprotein. In terms of processing, VPg is uridylylated by the polymerase and is covalently attached to the 5'-end of the polyadenylated genomic and subgenomic RNAs. This uridylylated form acts as a nucleotide-peptide primer for the polymerase.

The protein resides in the host endoplasmic reticulum membrane. The catalysed reaction is a ribonucleoside 5'-triphosphate + H2O = a ribonucleoside 5'-diphosphate + phosphate + H(+). The enzyme catalyses RNA(n) + a ribonucleoside 5'-triphosphate = RNA(n+1) + diphosphate. It carries out the reaction Endopeptidase with a preference for cleavage when the P1 position is occupied by Glu-|-Xaa and the P1' position is occupied by Gly-|-Yaa.. Functionally, together with NTPase and NS4, initiates the formation of the replication complex. Induces the proliferation of the host smooth ER membranes forming long tubular structures. These remodeled membranes probably form the viral factories that contain the replication complex. Its function is as follows. Displays NTPase activity, but no helicase activity. Induces the formation of convoluted membranes derived from the host ER. These remodeled membranes probably form the viral factories that contain the replication complex. Together with NS2 and NS4, initiates the formation of the replication complex. In terms of biological role, probable key protein responsible for the formation of membrane alterations by the virus. Induces the formation of convoluted membranes derived from the host ER. These remodeled membranes probably form the viral factories that contain the replication complex. Together with NS2 and NTPase, initiates the formation of the replication complex. Viral genome-linked protein is covalently linked to the 5'-end of the positive-strand, negative-strand genomic RNAs and subgenomic RNA. Acts as a genome-linked replication primer. May recruit ribosome to viral RNA thereby promoting viral proteins translation. Interacts with host translation initiation complex to allow the translation of viral proteins. Functionally, protease-polymerase p76 processes the polyprotein: Pro-Pol is first released by autocleavage, then all other proteins are cleaved. Cleaves host translation initiation factor eIF4G1, eIF4G2 and PABP1 thereby inducing a shutdown of host protein synthesis. This shutdown may not prevent viral mRNA from being translated since viral Vpg replaces the cap. Also functions as an RNA-directed RNA polymerase, which replicates genomic and antigenomic viral RNA by recognizing specific signals. Also transcribes a subgenomic mRNA by initiating RNA synthesis internally on antigenomic RNA. This sgRNA codes for structural proteins. Catalyzes the covalent attachment VPg with viral RNAs. In Canine calicivirus (strain 48) (CaCV), this protein is Genome polyprotein.